We begin with the raw amino-acid sequence, 393 residues long: Purine permease 14 (393 aa).

Ala-2 is subject to N-acetylalanine. Helical transmembrane passes span 46 to 66, 90 to 110, 133 to 153, 161 to 181, 189 to 209, 225 to 245, 268 to 288, 308 to 328, 339 to 359, and 363 to 383; these read WPTI…AKLL, TQSL…LIFI, LAVI…LAAM, GVFT…AAFI, WVVI…SSSF, WAAL…QNVF, VIIF…LIAG, VMAM…IVGL, VISV…FNFM, and FDAF…AYFF.

It belongs to the purine permeases (TC 2.A.7.14) family. In terms of tissue distribution, expressed in seedlings, leaves, embryos, ovules, seeds and the root and shoot meristems. In heart-stage embryos, detected in cells that failed to respond to cytokinins, including the prospective cotyledons.

Its subcellular location is the cell membrane. Functionally, purine permease implicated in ATP-dependent cytokinin translocation that controls the spatiotemporal landscape of cytokinin signaling. Depletes ligands from the apoplast, which leads to a suppression of the cytokinin response. The polypeptide is Purine permease 14 (Arabidopsis thaliana (Mouse-ear cress)).